Here is a 396-residue protein sequence, read N- to C-terminus: Tryptophan synthase beta chain 1 (396 aa).

Lys-86 is subject to N6-(pyridoxal phosphate)lysine.

The protein belongs to the TrpB family. In terms of assembly, tetramer of two alpha and two beta chains. Pyridoxal 5'-phosphate is required as a cofactor.

It catalyses the reaction (1S,2R)-1-C-(indol-3-yl)glycerol 3-phosphate + L-serine = D-glyceraldehyde 3-phosphate + L-tryptophan + H2O. Its pathway is amino-acid biosynthesis; L-tryptophan biosynthesis; L-tryptophan from chorismate: step 5/5. In terms of biological role, the beta subunit is responsible for the synthesis of L-tryptophan from indole and L-serine. The sequence is that of Tryptophan synthase beta chain 1 (trpB1) from Vibrio parahaemolyticus serotype O3:K6 (strain RIMD 2210633).